The sequence spans 349 residues: Hypoxia-inducible factor 1-alpha inhibitor (349 aa).

Residues 1–14 (MAATAAEVAASGSG) show a composition bias toward low complexity. A disordered region spans residues 1–51 (MAATAAEVAASGSGEAREEAEAPGPAWDESQLRSYSFPTRPIPRLSQSDPR). A2 is modified (N-acetylalanine). The interval 2-125 (AATAAEVAAS…PRSNREEIKF (124 aa)) is interaction with VHL. The JmjC domain maps to 142–307 (ERLYLQQTLN…KGAPTPKRIE (166 aa)). Residue Y145 participates in 2-oxoglutarate binding. Residues D152 and 181-183 (QLT) each bind substrate. T196 provides a ligand contact to 2-oxoglutarate. Fe cation is bound by residues H199 and D201. A substrate-binding site is contributed by 201–203 (DEQ). 2-oxoglutarate is bound by residues N205 and K214. Substrate is bound at residue 238 to 239 (RQ). H279 provides a ligand contact to Fe cation. N294 serves as a coordination point for 2-oxoglutarate. Substrate contacts are provided by A300 and N321.

Homodimer; homodimerization is essential for catalytic activity. Interacts with VHL and HIF1A. Part of a complex with VHL, HIF1A and HDAC1 or HDAC2 or HDAC3. Interacts with NFKB1 and NFKBIA. Interacts with NOTCH1, NOTCH2 and NOTCH3 but not with NOTCH4. Interacts with ABPA3. Interacts with TNKS2. Interacts with PPP1R12A. Interacts with UBE3A. Interacts with ASB4. Interacts with ANKS3. Interacts with NECAB3; the interaction is indirect and seems to be mediated by APBA3. Fe(2+) serves as cofactor.

Its subcellular location is the nucleus. The protein localises to the cytoplasm. It is found in the perinuclear region. It catalyses the reaction L-asparaginyl-[hypoxia-inducible factor alpha subunit] + 2-oxoglutarate + O2 = (3S)-3-hydroxy-L-asparaginyl-[hypoxia-inducible factor alpha subunit] + succinate + CO2. The enzyme catalyses L-histidyl-[ankyrin-repeat domain protein] + 2-oxoglutarate + O2 = (3S)-3-hydroxy-L-histidyl-[ankyrin-repeat domain protein] + succinate + CO2. It carries out the reaction L-asparaginyl-[ankyrin-repeat domain protein] + 2-oxoglutarate + O2 = (3S)-3-hydroxy-L-asparaginyl-[ankyrin-repeat domain protein] + succinate + CO2. The catalysed reaction is L-aspartyl-[ankyrin-repeat domain protein] + 2-oxoglutarate + O2 = (3S)-3-hydroxy-L-aspartyl-[ankyrin-repeat domain protein] + succinate + CO2. Hydroxylates HIF-1 alpha at 'Asn-799' in the C-terminal transactivation domain (CAD). Functions as an oxygen sensor and, under normoxic conditions, the hydroxylation prevents interaction of HIF-1 with transcriptional coactivators including Cbp/p300-interacting transactivator. Involved in transcriptional repression through interaction with HIF1A, VHL and histone deacetylases. Hydroxylates specific Asn residues within ankyrin repeat domains (ARD) of NFKB1, NFKBIA, NOTCH1, ASB4, PPP1R12A and several other ARD-containing proteins. Also hydroxylates Asp and His residues within ARDs of ANK1 and TNKS2, respectively. Negatively regulates NOTCH1 activity, accelerating myogenic differentiation. Positively regulates ASB4 activity, promoting vascular differentiation. This is Hypoxia-inducible factor 1-alpha inhibitor (Hif1an) from Mus musculus (Mouse).